The primary structure comprises 78 residues: Acyl carrier protein (78 aa).

In terms of domain architecture, Carrier spans 2–77 (SDIAERVKKI…DAVKFIEKAQ (76 aa)). Residue Ser37 is modified to O-(pantetheine 4'-phosphoryl)serine.

Belongs to the acyl carrier protein (ACP) family. 4'-phosphopantetheine is transferred from CoA to a specific serine of apo-ACP by AcpS. This modification is essential for activity because fatty acids are bound in thioester linkage to the sulfhydryl of the prosthetic group.

The protein resides in the cytoplasm. It participates in lipid metabolism; fatty acid biosynthesis. Functionally, carrier of the growing fatty acid chain in fatty acid biosynthesis. This is Acyl carrier protein from Rhizobium etli (strain CIAT 652).